The following is a 98-amino-acid chain: NADH-ubiquinone oxidoreductase chain 4L (98 aa).

3 consecutive transmembrane segments (helical) span residues 1-21, 29-49, and 61-81; these read MSMVYMNIMMAFTVSLVGLLM, SLLCLEGMMLSLFVMAALTIL, and IILLVFAACEAALGLSLLVMV.

This sequence belongs to the complex I subunit 4L family. Core subunit of respiratory chain NADH dehydrogenase (Complex I) which is composed of 45 different subunits.

Its subcellular location is the mitochondrion inner membrane. It carries out the reaction a ubiquinone + NADH + 5 H(+)(in) = a ubiquinol + NAD(+) + 4 H(+)(out). In terms of biological role, core subunit of the mitochondrial membrane respiratory chain NADH dehydrogenase (Complex I) which catalyzes electron transfer from NADH through the respiratory chain, using ubiquinone as an electron acceptor. Part of the enzyme membrane arm which is embedded in the lipid bilayer and involved in proton translocation. The sequence is that of NADH-ubiquinone oxidoreductase chain 4L (MT-ND4L) from Bos indicus (Zebu).